The primary structure comprises 97 residues: Co-chaperonin GroES (97 aa).

It belongs to the GroES chaperonin family. In terms of assembly, heptamer of 7 subunits arranged in a ring. Interacts with the chaperonin GroEL.

The protein resides in the cytoplasm. Its function is as follows. Together with the chaperonin GroEL, plays an essential role in assisting protein folding. The GroEL-GroES system forms a nano-cage that allows encapsulation of the non-native substrate proteins and provides a physical environment optimized to promote and accelerate protein folding. GroES binds to the apical surface of the GroEL ring, thereby capping the opening of the GroEL channel. This chain is Co-chaperonin GroES, found in Sodalis glossinidius (strain morsitans).